The sequence spans 557 residues: Probable WRKY transcription factor 20 (557 aa).

The span at 1–12 (MNPQANDRKEFQ) shows a compositional bias: basic and acidic residues. 2 disordered regions span residues 1–36 (MNPQANDRKEFQGDCSATGDLTAKHDSAGGNGGGGA) and 76–215 (KPEP…DGYN). Over residues 95–114 (SASSSSYTGRGFHQNTFTEQ) the composition is skewed to polar residues. Residues 151–169 (SSHSPSSISDAAGSSSELS) show a composition bias toward low complexity. Polar residues predominate over residues 193-207 (SIQTSQNDSRGSTPS). The WRKY 1 DNA-binding region spans 205 to 269 (TPSILADDGY…YKGTHDHPKP (65 aa)). Cys-236, Cys-241, His-264, and His-266 together coordinate Zn(2+). The tract at residues 257–348 (DIIYKGTHDH…PDDDDPFSKR (92 aa)) is disordered. Residues 282-299 (QEERLDKYPSSTGRDEKG) show a composition bias toward basic and acidic residues. Over residues 303-314 (YNLSNPNEQTGN) the composition is skewed to polar residues. Low complexity predominate over residues 321-332 (SASDDGGEAAAS). The segment at residues 375–440 (SEVDILDDGY…YEGKHDHDVP (66 aa)) is a DNA-binding region (WRKY 2). Zn(2+) is bound by residues Cys-406, Cys-411, His-435, and His-437. Disordered stretches follow at residues 433–486 (GKHD…QHQN) and 520–557 (NQYGQRETKNETQNGDISSLNNSSYPYPPNMGRVQSGP). Residues 520–536 (NQYGQRETKNETQNGDI) show a composition bias toward polar residues.

Belongs to the WRKY group I family.

The protein localises to the nucleus. Functionally, transcription factor. Interacts specifically with the W box (5'-(T)TGAC[CT]-3'), a frequently occurring elicitor-responsive cis-acting element. This chain is Probable WRKY transcription factor 20 (WRKY20), found in Arabidopsis thaliana (Mouse-ear cress).